A 75-amino-acid chain; its full sequence is UPF0270 protein PSPTO_1630 (75 aa).

Belongs to the UPF0270 family.

The sequence is that of UPF0270 protein PSPTO_1630 from Pseudomonas syringae pv. tomato (strain ATCC BAA-871 / DC3000).